Consider the following 715-residue polypeptide: Fatty acid oxidation complex subunit alpha (715 aa).

The enoyl-CoA hydratase/isomerase stretch occupies residues 1-190; sequence MIYEGKAITV…KVGAVDAVVA (190 aa). D297 provides a ligand contact to substrate. The segment at 312–715 is 3-hydroxyacyl-CoA dehydrogenase; it reads HDVKQAAVLG…MAKNGQRFFN (404 aa). Residues M325, D344, 401 to 403, K408, and S430 contribute to the NAD(+) site; that span reads VVE. H451 functions as the For 3-hydroxyacyl-CoA dehydrogenase activity in the catalytic mechanism. Residue N454 participates in NAD(+) binding. Substrate contacts are provided by N501 and Y660.

In the N-terminal section; belongs to the enoyl-CoA hydratase/isomerase family. It in the C-terminal section; belongs to the 3-hydroxyacyl-CoA dehydrogenase family. Heterotetramer of two alpha chains (FadB) and two beta chains (FadA).

It carries out the reaction a (3S)-3-hydroxyacyl-CoA + NAD(+) = a 3-oxoacyl-CoA + NADH + H(+). The catalysed reaction is a (3S)-3-hydroxyacyl-CoA = a (2E)-enoyl-CoA + H2O. The enzyme catalyses a 4-saturated-(3S)-3-hydroxyacyl-CoA = a (3E)-enoyl-CoA + H2O. It catalyses the reaction (3S)-3-hydroxybutanoyl-CoA = (3R)-3-hydroxybutanoyl-CoA. It carries out the reaction a (3Z)-enoyl-CoA = a 4-saturated (2E)-enoyl-CoA. The catalysed reaction is a (3E)-enoyl-CoA = a 4-saturated (2E)-enoyl-CoA. The protein operates within lipid metabolism; fatty acid beta-oxidation. Its function is as follows. Involved in the aerobic and anaerobic degradation of long-chain fatty acids via beta-oxidation cycle. Catalyzes the formation of 3-oxoacyl-CoA from enoyl-CoA via L-3-hydroxyacyl-CoA. It can also use D-3-hydroxyacyl-CoA and cis-3-enoyl-CoA as substrate. The sequence is that of Fatty acid oxidation complex subunit alpha from Pseudomonas putida (strain GB-1).